Reading from the N-terminus, the 1350-residue chain is 1-phosphatidylinositol 4,5-bisphosphate phosphodiesterase gamma plc-3 (1350 aa).

The tract at residues 1–40 (MQHGSLGPSSSSRKTTVTSTAGSVHLHHRSSNGFSTASRA) is disordered. Low complexity predominate over residues 9-20 (SSSSRKTTVTST). Residues 31-40 (SNGFSTASRA) show a composition bias toward polar residues. In terms of domain architecture, PI-PLC X-box spans 352-503 (HDMSRPLSHY…LKKKIIVKHK (152 aa)). Residues histidine 367 and histidine 419 contribute to the active site. A disordered region spans residues 570–594 (NPNDDTVSVSGDEEREEETPSGFGV). 2 consecutive SH2 domains span residues 605 to 704 (WFHG…TIPC) and 715 to 804 (WFSA…RFPV). The 59-residue stretch at 832-890 (DKEVQARALRPYRGTADDELSFPANVIITVLRKEEGLWRGRYGSLTGWFPSAHVQEILP) folds into the SH3 domain. One can recognise a PH domain in the interval 855 to 960 (ANVIITVLRK…WQNNLFELTR (106 aa)). The 111-residue stretch at 982–1092 (LSNLVVYCQA…CGYLLKPDYM (111 aa)) folds into the PI-PLC Y-box domain. The C2 domain occupies 1099–1220 (PTNTEKFATA…CGFRSVPLKN (122 aa)). Positions 1270 to 1350 (GDSIPREMAP…KFSFGKSSKS (81 aa)) are disordered. Over residues 1283–1329 (TSATDRSLDSPTNSESRATLLSGQRGSQDSMDSAAETSSIASGTISS) the composition is skewed to polar residues. A compositionally biased stretch (low complexity) spans 1340–1350 (KKFSFGKSSKS).

It depends on Ca(2+) as a cofactor. In terms of tissue distribution, expressed in intestine, isthmus of the pharynx, proximal gonad sheath cells, spermatheca and uterine sheath cells. In males, expressed in the valve cell, the vas deferens and retractor and ventral protactor muscles.

The catalysed reaction is a 1,2-diacyl-sn-glycero-3-phospho-(1D-myo-inositol-4,5-bisphosphate) + H2O = 1D-myo-inositol 1,4,5-trisphosphate + a 1,2-diacyl-sn-glycerol + H(+). Its function is as follows. Mediates the production of the second messenger molecules diacylglycerol (DAG) and inositol 1,4,5-trisphosphate (IP3) which plays an important role in the regulation of intracellular signaling cascades. Regulates basal and ovulatory sheath cell contractions by controlling Ca(2+) oscillations via IP3-mediated activation of IP3 receptor itr-1. In intestinal epithelial cells, regulates Ca(2+) oscillations which control posterior body wall muscle contractions required for defecation by IP3-mediated activation of itr-1 and probably by activating TRPM channels gon-2 and gtl-1 by reducing PIP2 levels. By activating tpa-1 via DAG production, required for the expression of antimicrobial peptide nlp-29 in the epidermis in response to fungal infection or physical injury. By triggering Ca(2+) transient via IP3-mediated activation of IPR3 receptor itr-1 in ASH sensory neurons, involved in avoidance behavior in response to nose touch. Probably by regulating neuronal transmission in ALA neurons, mediates the decrease in pharyngeal pumping and locomotion during the quiescent state that precedes each larval molt, downstream of lin-3 and receptor let-23 and upstream of tpa-1 but not itr-1. During embryogenesis, may play an role in epidermal morphogenesis together with plc-1. Probably downstream of receptor daf-2, regulates male-sex muscle excitability in the absence of food. In Caenorhabditis elegans, this protein is 1-phosphatidylinositol 4,5-bisphosphate phosphodiesterase gamma plc-3.